The chain runs to 202 residues: Imidazoleglycerol-phosphate dehydratase (202 aa).

It belongs to the imidazoleglycerol-phosphate dehydratase family.

It is found in the cytoplasm. The catalysed reaction is D-erythro-1-(imidazol-4-yl)glycerol 3-phosphate = 3-(imidazol-4-yl)-2-oxopropyl phosphate + H2O. Its pathway is amino-acid biosynthesis; L-histidine biosynthesis; L-histidine from 5-phospho-alpha-D-ribose 1-diphosphate: step 6/9. This chain is Imidazoleglycerol-phosphate dehydratase, found in Rhizobium etli (strain ATCC 51251 / DSM 11541 / JCM 21823 / NBRC 15573 / CFN 42).